Here is a 386-residue protein sequence, read N- to C-terminus: Putrescine N-methyltransferase 4 (386 aa).

Composition is skewed to polar residues over residues 1–14 (MEVI…STIF), 23–48 (GHQS…GHHN), and 57–87 (HQNG…NGNE). The disordered stretch occupies residues 1 to 87 (MEVISTNTNG…GTISHDNGNE (87 aa)). One can recognise a PABS domain in the interval 97–334 (LGWFSEFSAL…GVIGYMLCST (238 aa)). Residues Gln-128, Glu-203, and 234–235 (DG) each bind S-adenosyl-L-methionine. The active-site Proton acceptor is the Asp-253. S-adenosyl-L-methionine is bound at residue Tyr-322.

The protein belongs to the class I-like SAM-binding methyltransferase superfamily. Putrescine methyltransferase family. In terms of tissue distribution, predominantly expressed in roots.

It catalyses the reaction putrescine + S-adenosyl-L-methionine = N-methylputrescine + S-adenosyl-L-homocysteine + H(+). It participates in alkaloid biosynthesis; nicotine biosynthesis. Its function is as follows. Involved in the biosynthesis of pyridine alkaloid natural products, leading mainly to the production of anabasine, anatabine, nicotine and nornicotine, effective deterrents against herbivores with antiparasitic and pesticide properties (neurotoxins); nornicotine serves as the precursor in the synthesis of the carcinogen compound N'-nitrosonornicotine (NNN). Methyltransferase that mediates the conversion of putrescine to N-methylputrescine. Promotes leaves ripening. This is Putrescine N-methyltransferase 4 from Nicotiana tabacum (Common tobacco).